Consider the following 138-residue polypeptide: ATP synthase epsilon chain (138 aa).

Belongs to the ATPase epsilon chain family. F-type ATPases have 2 components, CF(1) - the catalytic core - and CF(0) - the membrane proton channel. CF(1) has five subunits: alpha(3), beta(3), gamma(1), delta(1), epsilon(1). CF(0) has three main subunits: a, b and c.

The protein resides in the cell inner membrane. In terms of biological role, produces ATP from ADP in the presence of a proton gradient across the membrane. In Blochmanniella floridana, this protein is ATP synthase epsilon chain.